Here is an 88-residue protein sequence, read N- to C-terminus: Small ribosomal subunit protein uS15 (88 aa).

This sequence belongs to the universal ribosomal protein uS15 family. In terms of assembly, part of the 30S ribosomal subunit. Forms a bridge to the 50S subunit in the 70S ribosome, contacting the 23S rRNA.

In terms of biological role, one of the primary rRNA binding proteins, it binds directly to 16S rRNA where it helps nucleate assembly of the platform of the 30S subunit by binding and bridging several RNA helices of the 16S rRNA. Its function is as follows. Forms an intersubunit bridge (bridge B4) with the 23S rRNA of the 50S subunit in the ribosome. This chain is Small ribosomal subunit protein uS15, found in Borrelia turicatae (strain 91E135).